The sequence spans 340 residues: MSELDQLRQEAEQLKNQIRDARKACADATLSQITNNIDPVGRIQMRTRRTLRGHLAKIYAMHWGTDSRLLVSASQDGKLIIWDSYTTNKVHAIPLRSSWVMTCAYAPSGNYVACGGLDNICSIYNLKTREGNVRVSRELAGHTGYLSCCRFLDDNQIVTSSGDTTCALWDIETGQQTTTFTGHTGDVMSLSLAPDTRLFVSGACDASAKLWDVREGMCRQTFTGHESDINAICFFPNGNAFATGSDDATCRLFDLRADQELMTYSHDNIICGITSVSFSKSGRLLLAGYDDFNCNVWDALKADRAGVLAGHDNRVSCLGVTDDGMAVATGSWDSFLKIWN.

Serine 2 is modified (N-acetylserine). Serine 2 is subject to Phosphoserine. 7 WD repeats span residues 46 to 94 (RTRR…HAIP), 95 to 140 (LRSS…RELA), 141 to 181 (GHTG…TTFT), 182 to 223 (GHTG…QTFT), 224 to 267 (GHES…YSHD), 268 to 309 (NIIC…GVLA), and 310 to 340 (GHDN…KIWN). At histidine 266 the chain carries Phosphohistidine.

Belongs to the WD repeat G protein beta family. As to quaternary structure, g proteins are composed of 3 units, alpha, beta and gamma. The heterodimer formed by GNB1 and GNG2 interacts with ARHGEF5. The heterodimer formed by GNB1 and GNG2 interacts with GRK2. Forms a complex with GNAO1 and GNG3. Interacts with ARHGEF18 and RASD2. Forms complexes with TAS2R14 and G-proteins; these complexes play a role in the perception of bitterness. Component of the TAS2R14-GNAI1 complex, consisting of TAS2R14, GNAI1, GNB1 and GNG2. Component of the TAS2R14-GNAT3 complex, consisting of TAS2R14, GNAT3, GNB1 and GNG2. Component of the TAS2R14-GNAS2 complex, consisting of TAS2R14, GNAS2, GNB1 and GNG2. In terms of processing, phosphorylation at His-266 by NDKB contributes to G protein activation by increasing the high energetic phosphate transfer onto GDP.

Its function is as follows. Guanine nucleotide-binding proteins (G proteins) are involved as a modulator or transducer in various transmembrane signaling systems. The beta and gamma chains are required for the GTPase activity, for replacement of GDP by GTP, and for G protein-effector interaction. The chain is Guanine nucleotide-binding protein G(I)/G(S)/G(T) subunit beta-1 (GNB1) from Bos taurus (Bovine).